A 311-amino-acid polypeptide reads, in one-letter code: Meiotically up-regulated gene 146 protein (311 aa).

Its subcellular location is the cytoplasm. It is found in the nucleus. Has a role in sporulation. The sequence is that of Meiotically up-regulated gene 146 protein (mug146) from Schizosaccharomyces pombe (strain 972 / ATCC 24843) (Fission yeast).